A 390-amino-acid polypeptide reads, in one-letter code: GTPase Obg (390 aa).

Positions 1 to 159 (MKFIDESLIR…RDLLLELMLL (159 aa)) constitute an Obg domain. Residues 160-333 (ADVGMLGLPN…LCRDIMDFII (174 aa)) enclose the OBG-type G domain. Residues 166–173 (GLPNAGKS), 191–195 (FTTLV), 213–216 (DIPG), 283–286 (NKID), and 314–316 (SAA) contribute to the GTP site. Residues serine 173 and threonine 193 each contribute to the Mg(2+) site.

It belongs to the TRAFAC class OBG-HflX-like GTPase superfamily. OBG GTPase family. As to quaternary structure, monomer. Mg(2+) is required as a cofactor.

It localises to the cytoplasm. Its function is as follows. An essential GTPase which binds GTP, GDP and possibly (p)ppGpp with moderate affinity, with high nucleotide exchange rates and a fairly low GTP hydrolysis rate. Plays a role in control of the cell cycle, stress response, ribosome biogenesis and in those bacteria that undergo differentiation, in morphogenesis control. This Haemophilus influenzae (strain 86-028NP) protein is GTPase Obg.